The sequence spans 354 residues: DNA polymerase IV (354 aa).

A UmuC domain is found at 14 to 198 (IIHIDMDAFF…MDIAKFHGVG (185 aa)). 2 residues coordinate Mg(2+): D18 and D116. E117 is an active-site residue.

Belongs to the DNA polymerase type-Y family. Monomer. It depends on Mg(2+) as a cofactor.

It is found in the cytoplasm. It carries out the reaction DNA(n) + a 2'-deoxyribonucleoside 5'-triphosphate = DNA(n+1) + diphosphate. In terms of biological role, poorly processive, error-prone DNA polymerase involved in untargeted mutagenesis. Copies undamaged DNA at stalled replication forks, which arise in vivo from mismatched or misaligned primer ends. These misaligned primers can be extended by PolIV. Exhibits no 3'-5' exonuclease (proofreading) activity. May be involved in translesional synthesis, in conjunction with the beta clamp from PolIII. This is DNA polymerase IV from Streptococcus gordonii (strain Challis / ATCC 35105 / BCRC 15272 / CH1 / DL1 / V288).